A 429-amino-acid chain; its full sequence is Ribosomal RNA small subunit methyltransferase B (429 aa).

S-adenosyl-L-methionine-binding positions include 254–260 (CAAPGGK), D277, D303, and D322. C375 functions as the Nucleophile in the catalytic mechanism.

It belongs to the class I-like SAM-binding methyltransferase superfamily. RsmB/NOP family.

The protein resides in the cytoplasm. It catalyses the reaction cytidine(967) in 16S rRNA + S-adenosyl-L-methionine = 5-methylcytidine(967) in 16S rRNA + S-adenosyl-L-homocysteine + H(+). Its function is as follows. Specifically methylates the cytosine at position 967 (m5C967) of 16S rRNA. The protein is Ribosomal RNA small subunit methyltransferase B of Erwinia tasmaniensis (strain DSM 17950 / CFBP 7177 / CIP 109463 / NCPPB 4357 / Et1/99).